The sequence spans 138 residues: uncharacterized protein (138 aa).

Helical transmembrane passes span 8–28, 47–67, and 82–102; these read LIIQ…AFLP, FIIC…TIIV, and TLPV…IAFI.

The protein to U.parvum UU007, UU008 and UU041.

The protein resides in the cell membrane. This is an uncharacterized protein from Ureaplasma parvum serovar 3 (strain ATCC 700970).